We begin with the raw amino-acid sequence, 183 residues long: Adenine phosphoribosyltransferase (183 aa).

This sequence belongs to the purine/pyrimidine phosphoribosyltransferase family. In terms of assembly, homodimer.

It localises to the cytoplasm. The catalysed reaction is AMP + diphosphate = 5-phospho-alpha-D-ribose 1-diphosphate + adenine. It functions in the pathway purine metabolism; AMP biosynthesis via salvage pathway; AMP from adenine: step 1/1. Its function is as follows. Catalyzes a salvage reaction resulting in the formation of AMP, that is energically less costly than de novo synthesis. This chain is Adenine phosphoribosyltransferase, found in Blochmanniella floridana.